The sequence spans 371 residues: Photosynthetic reaction center cytochrome c subunit (371 aa).

Residues Met-114, Cys-127, Cys-130, His-131, Met-153, His-167, Cys-178, Cys-181, His-182, Met-267, Cys-278, Cys-281, His-282, Cys-339, Cys-342, and His-343 each contribute to the heme site.

In terms of assembly, component of the photosynthetic reaction center composed of protein subunits L (PufL), M (PufM), H (PuhA) and cytochrome C (PufC). The reaction center interacts with light-harvesting antenna complex LH1. Binds 4 heme groups per subunit.

The protein localises to the cellular chromatophore membrane. The reaction center of purple bacteria contains a tightly bound cytochrome molecule which re-reduces the photo oxidized primary electron donor. In Roseobacter denitrificans (strain ATCC 33942 / OCh 114) (Erythrobacter sp. (strain OCh 114)), this protein is Photosynthetic reaction center cytochrome c subunit (pufC).